We begin with the raw amino-acid sequence, 444 residues long: Exodeoxyribonuclease 7 large subunit (444 aa).

The protein belongs to the XseA family. Heterooligomer composed of large and small subunits.

It localises to the cytoplasm. It catalyses the reaction Exonucleolytic cleavage in either 5'- to 3'- or 3'- to 5'-direction to yield nucleoside 5'-phosphates.. In terms of biological role, bidirectionally degrades single-stranded DNA into large acid-insoluble oligonucleotides, which are then degraded further into small acid-soluble oligonucleotides. This is Exodeoxyribonuclease 7 large subunit from Pseudoalteromonas translucida (strain TAC 125).